A 95-amino-acid polypeptide reads, in one-letter code: Aspartyl/glutamyl-tRNA(Asn/Gln) amidotransferase subunit C (95 aa).

Belongs to the GatC family. Heterotrimer of A, B and C subunits.

The enzyme catalyses L-glutamyl-tRNA(Gln) + L-glutamine + ATP + H2O = L-glutaminyl-tRNA(Gln) + L-glutamate + ADP + phosphate + H(+). It carries out the reaction L-aspartyl-tRNA(Asn) + L-glutamine + ATP + H2O = L-asparaginyl-tRNA(Asn) + L-glutamate + ADP + phosphate + 2 H(+). Allows the formation of correctly charged Asn-tRNA(Asn) or Gln-tRNA(Gln) through the transamidation of misacylated Asp-tRNA(Asn) or Glu-tRNA(Gln) in organisms which lack either or both of asparaginyl-tRNA or glutaminyl-tRNA synthetases. The reaction takes place in the presence of glutamine and ATP through an activated phospho-Asp-tRNA(Asn) or phospho-Glu-tRNA(Gln). The protein is Aspartyl/glutamyl-tRNA(Asn/Gln) amidotransferase subunit C of Rhizobium rhizogenes (strain K84 / ATCC BAA-868) (Agrobacterium radiobacter).